The following is a 312-amino-acid chain: Lichenase-2 (312 aa).

An N-terminal signal peptide occupies residues Pro1 to Ser6. The active-site Proton donor is Glu99. Asn196 carries N-linked (GlcNAc...) asparagine glycosylation. Glu238 serves as the catalytic Nucleophile.

Belongs to the glycosyl hydrolase 17 family.

It carries out the reaction Hydrolysis of (1-&gt;4)-beta-D-glucosidic linkages in beta-D-glucans containing (1-&gt;3)- and (1-&gt;4)-bonds.. It functions in the pathway glycan metabolism; beta-D-glucan degradation. Its function is as follows. Functions in plant cell wall hydrolysis during mobilization of the endosperm in germinating grain or during the growth of vegetative tissues. The chain is Lichenase-2 from Hordeum vulgare (Barley).